The following is a 336-amino-acid chain: tRNA pseudouridine synthase D (336 aa).

Catalysis depends on aspartate 84, which acts as the Nucleophile. The TRUD domain occupies 164–298 (GVPNYFGEQR…TPSYRWLVGD (135 aa)).

Belongs to the pseudouridine synthase TruD family.

The enzyme catalyses uridine(13) in tRNA = pseudouridine(13) in tRNA. In terms of biological role, responsible for synthesis of pseudouridine from uracil-13 in transfer RNAs. In Cellvibrio japonicus (strain Ueda107) (Pseudomonas fluorescens subsp. cellulosa), this protein is tRNA pseudouridine synthase D.